The chain runs to 219 residues: 7-cyano-7-deazaguanine synthase (219 aa).

10–20 (FSGGQDSTTCL) lines the ATP pocket. Zn(2+)-binding residues include Cys-188, Cys-197, Cys-200, and Cys-203.

This sequence belongs to the QueC family. Zn(2+) is required as a cofactor.

It carries out the reaction 7-carboxy-7-deazaguanine + NH4(+) + ATP = 7-cyano-7-deazaguanine + ADP + phosphate + H2O + H(+). The protein operates within purine metabolism; 7-cyano-7-deazaguanine biosynthesis. In terms of biological role, catalyzes the ATP-dependent conversion of 7-carboxy-7-deazaguanine (CDG) to 7-cyano-7-deazaguanine (preQ(0)). The polypeptide is 7-cyano-7-deazaguanine synthase (Bacteroides fragilis (strain ATCC 25285 / DSM 2151 / CCUG 4856 / JCM 11019 / LMG 10263 / NCTC 9343 / Onslow / VPI 2553 / EN-2)).